A 428-amino-acid polypeptide reads, in one-letter code: MLDPKFLRNELAVTAERLATRGFILDVAHLTQLEEKRKSLQVATEELQASRNAISKSIGQAKARGEDVDAIMAQVGDLGAQLDAKKVELAAVLEEVNAIAMSMPNLPDESAPIGADETENVEIRRWGTPRSFDFPVKDHIDLGEGLNGLDFKSAVKITGSRFIVMKGQIARLNRALGQFMLDLHTTEHGYTEAYVPLLVNEASLLGTGQLPKFGEDLFHTKPATEEGQGLSLIPTAEVPLTNLVRDSIVDEDELPIKLTAHTACFRSEAGSYGKDTRGLIRQHQFDKVELVQLVKPEDSMAALEALTGHAETVLQRLGLPYRTVILCTGDMGFGSSKTYDIEVWLPGQNTYREISSCSNMKDFQARRMQARYRVKADNKPALLHTLNGSGLAVGRTLVAILENYQNADGSVTIPEALRPYMGGLTQIG.

235-237 contributes to the L-serine binding site; sequence TAE. An ATP-binding site is contributed by 266–268; it reads RSE. E289 is a binding site for L-serine. Residue 353-356 participates in ATP binding; the sequence is EISS. S389 serves as a coordination point for L-serine.

Belongs to the class-II aminoacyl-tRNA synthetase family. Type-1 seryl-tRNA synthetase subfamily. Homodimer. The tRNA molecule binds across the dimer.

Its subcellular location is the cytoplasm. It catalyses the reaction tRNA(Ser) + L-serine + ATP = L-seryl-tRNA(Ser) + AMP + diphosphate + H(+). The catalysed reaction is tRNA(Sec) + L-serine + ATP = L-seryl-tRNA(Sec) + AMP + diphosphate + H(+). The protein operates within aminoacyl-tRNA biosynthesis; selenocysteinyl-tRNA(Sec) biosynthesis; L-seryl-tRNA(Sec) from L-serine and tRNA(Sec): step 1/1. In terms of biological role, catalyzes the attachment of serine to tRNA(Ser). Is also able to aminoacylate tRNA(Sec) with serine, to form the misacylated tRNA L-seryl-tRNA(Sec), which will be further converted into selenocysteinyl-tRNA(Sec). The sequence is that of Serine--tRNA ligase from Shewanella sp. (strain ANA-3).